The chain runs to 482 residues: PHD finger protein At3g20280 (482 aa).

A PHD-type zinc finger spans residues 45-97; sequence AMACQICEVTINEMDTLLICDACEKAYHLKCLQGNNMKGVPKSEWHCSRCVQA. 2 disordered regions span residues 188 to 210 and 314 to 482; these read TNIGSQGSKENVACGANSPAPVS and SSNS…ENAA. Low complexity predominate over residues 314 to 324; that stretch reads SSNSQQAVSHS. Composition is skewed to polar residues over residues 377–386 and 393–428; these read ACQNHPTASP and QDSTITAAPSVTQEDSAFNTEKTPPQPLSVSSNYDS. Residues 447-482 show a composition bias toward basic and acidic residues; sequence DSEKGKGLNGLDDRHQEQPSEPEFYKSDSVKEENAA.

This chain is PHD finger protein At3g20280, found in Arabidopsis thaliana (Mouse-ear cress).